Reading from the N-terminus, the 405-residue chain is FK506-binding protein 4 (405 aa).

Disordered regions lie at residues 49–117 and 164–297; these read THNP…EDEL and QQDE…PQKK. Composition is skewed to acidic residues over residues 59 to 84, 98 to 117, and 165 to 201; these read ESDDEWSDEDEDEEILSEEDDGEMEV, VEEEDSEEEDEDESDFEDEL, and QDEDSDDESDSDFDGEDDYSELYGSDDDLELDSEEEA. 2 stretches are compositionally biased toward basic and acidic residues: residues 238 to 252 and 265 to 276; these read RKAEELESPAKEDAA and AKVEGEKAEEKP. Residues 319 to 405 enclose the PPIase FKBP-type domain; sequence GKRLGMRYIG…KFDVKLVSIN (87 aa).

It belongs to the FKBP-type PPIase family. FKBP3/4 subfamily. Binds to histones H3 and H4.

The protein localises to the nucleus. It catalyses the reaction [protein]-peptidylproline (omega=180) = [protein]-peptidylproline (omega=0). Its activity is regulated as follows. Inhibited by both FK506 and rapamycin. Functionally, PPIase that acts as a histone chaperone. Histone proline isomerase that increases the rate of cis-trans isomerization at prolines on the histone H3 N-terminal tail. Proline isomerization influences H3 methylation thereby regulating gene expression. The polypeptide is FK506-binding protein 4 (FPR4) (Cryptococcus neoformans var. neoformans serotype D (strain B-3501A) (Filobasidiella neoformans)).